Consider the following 772-residue polypeptide: Ribosomal protein S6 kinase alpha-4 (772 aa).

The Protein kinase 1 domain occupies 33–301; the sequence is FELLKVLGTG…AQEVRNHPFF (269 aa). ATP-binding positions include 39 to 47 and Lys-65; that span reads LGTGAYGKV. Asp-161 serves as the catalytic Proton acceptor. Ser-196 carries the post-translational modification Phosphoserine; by autocatalysis. The AGC-kinase C-terminal domain maps to 302 to 371; sequence QGLDWVALAA…VAPSILFDHN (70 aa). Ser-343 carries the post-translational modification Phosphoserine; by MAPK1, MAPK3 and MAPK14. Ser-347 is subject to Phosphoserine. 2 positions are modified to phosphoserine; by autocatalysis: Ser-360 and Ser-365. The Protein kinase 2 domain occupies 411–674; that stretch reads DLREPALGQG…LEGLRGSSWL (264 aa). Residues 417–425 and Lys-440 each bind ATP; that span reads LGQGSFSVC. Asp-530 serves as the catalytic Proton acceptor. A Phosphothreonine modification is found at Thr-542. Thr-568 carries the phosphothreonine; by MAPK1, MAPK3 and MAPK14 modification. Phosphoserine occurs at positions 634 and 678. 2 disordered regions span residues 673-696 and 728-772; these read WLQD…SSGP and AKRR…LPPS. Residue Thr-687 is modified to Phosphothreonine. A required for nuclear targeting and association with MAPK14 region spans residues 725-772; that stretch reads APLAKRRKQKLRSATASRRGSPAPANPGRAPVASKGAPRRANGPLPPS. Position 737 is a phosphoserine; by autocatalysis (Ser-737). The residue at position 745 (Ser-745) is a Phosphoserine.

The protein belongs to the protein kinase superfamily. AGC Ser/Thr protein kinase family. S6 kinase subfamily. In terms of assembly, forms a complex with either MAPK1/ERK2 or MAPK3/ERK1 in quiescent cells which transiently dissociates following mitogenic stimulation. Also associates with MAPK14/p38-alpha. Activated RPS6KA4 associates with and phosphorylates the NF-kappa-B p65 subunit RELA. It depends on Mg(2+) as a cofactor. In terms of processing, ser-343 and Thr-568 phosphorylation is required for kinase activity. Ser-343 and Ser-196 are autophosphorylated by the C-terminal kinase domain, and their phosphorylation is essential for the catalytic activity of the N-terminal kinase domain. Phosphorylated at Ser-343, Thr-568 and Thr-687 by MAPK1/ERK2, MAPK3/ERK1 and MAPK14/p38-alpha. Autophosphorylated at Ser-737 and Ser-745 by the N-terminal kinase domain.

The protein localises to the nucleus. It carries out the reaction L-seryl-[protein] + ATP = O-phospho-L-seryl-[protein] + ADP + H(+). The enzyme catalyses L-threonyl-[protein] + ATP = O-phospho-L-threonyl-[protein] + ADP + H(+). Its activity is regulated as follows. Activated by phosphorylation at Ser-343, Thr-568 and Thr-687 by MAPK1/ERK2, MAPK3/ERK1 and MAPK14/p38-alpha, and by further autophosphorylation of Ser-196, Ser-360 and Ser-365 by the activated C-terminal kinase domain. Functionally, serine/threonine-protein kinase that is required for the mitogen or stress-induced phosphorylation of the transcription factors CREB1 and ATF1 and for the regulation of the transcription factor RELA, and that contributes to gene activation by histone phosphorylation and functions in the regulation of inflammatory genes. Phosphorylates CREB1 and ATF1 in response to mitogenic or stress stimuli such as UV-C irradiation, epidermal growth factor (EGF) and anisomycin. Plays an essential role in the control of RELA transcriptional activity in response to TNF. Phosphorylates 'Ser-10' of histone H3 in response to mitogenics, stress stimuli and EGF, which results in the transcriptional activation of several immediate early genes, including proto-oncogenes c-fos/FOS and c-jun/JUN. May also phosphorylate 'Ser-28' of histone H3. Mediates the mitogen- and stress-induced phosphorylation of high mobility group protein 1 (HMGN1/HMG14). In lipopolysaccharide-stimulated primary macrophages, acts downstream of the Toll-like receptor TLR4 to limit the production of pro-inflammatory cytokines. Functions probably by inducing transcription of the MAP kinase phosphatase DUSP1 and the anti-inflammatory cytokine interleukin 10 (IL10), via CREB1 and ATF1 transcription factors. This chain is Ribosomal protein S6 kinase alpha-4 (RPS6KA4), found in Homo sapiens (Human).